The sequence spans 109 residues: Nucleoid-associated protein ETA_24730 (109 aa).

This sequence belongs to the YbaB/EbfC family. Homodimer.

The protein resides in the cytoplasm. It localises to the nucleoid. Functionally, binds to DNA and alters its conformation. May be involved in regulation of gene expression, nucleoid organization and DNA protection. The protein is Nucleoid-associated protein ETA_24730 of Erwinia tasmaniensis (strain DSM 17950 / CFBP 7177 / CIP 109463 / NCPPB 4357 / Et1/99).